Consider the following 554-residue polypeptide: Urocanate hydratase (554 aa).

Residues 51–52, Gln129, 175–177, Glu195, Arg200, 241–242, 262–266, 272–273, and Tyr321 each bind NAD(+); these read GG, GMG, NA, QTSAH, and YL. Cys409 is a catalytic residue. Gly491 lines the NAD(+) pocket.

The protein belongs to the urocanase family. The cofactor is NAD(+).

The protein localises to the cytoplasm. It catalyses the reaction 4-imidazolone-5-propanoate = trans-urocanate + H2O. Its pathway is amino-acid degradation; L-histidine degradation into L-glutamate; N-formimidoyl-L-glutamate from L-histidine: step 2/3. Catalyzes the conversion of urocanate to 4-imidazolone-5-propionate. This Caulobacter sp. (strain K31) protein is Urocanate hydratase.